Reading from the N-terminus, the 196-residue chain is MTWQSDYSRDYEVKNHMECQNRSDKYIWSPHDAYFYKGLSELIVDIDRLIYLSLEKIRKDFVFINLSTDSLSEFINRDNEWLSAVKGKQVVLIAARKSEALANYWYYNSNIRGVVYAGLSRDIRKELAYVINGRFLRKDIKKDKITDREMEIIRMTAQGMQPKSIARIENCSVKTVYTHRRNAEAKLYSKIYKLVQ.

The 59-residue stretch at 138–196 folds into the HTH luxR-type domain; it reads KDIKKDKITDREMEIIRMTAQGMQPKSIARIENCSVKTVYTHRRNAEAKLYSKIYKLVQ. The segment at residues 162-181 is a DNA-binding region (H-T-H motif); sequence PKSIARIENCSVKTVYTHRR.

It belongs to the EcpR/MatA family.

It localises to the cytoplasm. In terms of biological role, part of the ecpRABCDE operon, which encodes the E.coli common pilus (ECP). ECP is found in both commensal and pathogenic strains and plays a dual role in early-stage biofilm development and host cell recognition. Positively regulates the expression of the ecp operon. This is HTH-type transcriptional regulator EcpR (ecpR) from Escherichia coli O139:H28 (strain E24377A / ETEC).